The chain runs to 321 residues: uncharacterized protein (321 aa).

ATP is bound at residue 28–35 (GPINSGKT).

This sequence belongs to the archaeal ATPase family.

This is an uncharacterized protein from Pyrococcus horikoshii (strain ATCC 700860 / DSM 12428 / JCM 9974 / NBRC 100139 / OT-3).